The following is a 292-amino-acid chain: Aquaporin-3 (292 aa).

Over 1–24 the chain is Cytoplasmic; it reads MGRQKELVSRCGEMLHIRYRLLRQ. The chain crosses the membrane as a helical span at residues 25–42; the sequence is ALAECLGTLILVMFGCGS. At 43 to 56 the chain is on the extracellular side; it reads VAQVVLSRGTHGGF. A helical transmembrane segment spans residues 57–74; that stretch reads LTINLAFGFAVTLGILIA. Topologically, residues 75–78 are cytoplasmic; that stretch reads GQVS. Positions 79–92 form an intramembrane region, discontinuously helical; that stretch reads GAHLNPAVTFAMCF. Positions 83-85 match the NPA 1 motif; it reads NPA. Residues 93 to 100 lie on the Cytoplasmic side of the membrane; that stretch reads LAREPWIK. A helical transmembrane segment spans residues 101–121; it reads LPIYTLAQTLGAFLGAGIVFG. At 122–159 the chain is on the extracellular side; that stretch reads LYYDAIWHFADNQLFVSGPNGTAGIFATYPSGHLDMIN. N-linked (GlcNAc...) asparagine glycosylation is present at Asn-141. Residues 160–177 traverse the membrane as a helical segment; the sequence is GFFDQFIGTASLIVCVLA. Residues 178–189 are Cytoplasmic-facing; that stretch reads IVDPYNNPVPRG. The chain crosses the membrane as a helical span at residues 190 to 206; it reads LEAFTVGLVVLVIGTSM. The Extracellular portion of the chain corresponds to 207–210; the sequence is GFNS. The discontinuously helical intramembrane region spans 211–224; sequence GYAVNPARDFGPRL. The NPA 2 signature appears at 215–217; that stretch reads NPA. The Extracellular portion of the chain corresponds to 225–242; sequence FTALAGWGSAVFTTGQHW. A helical membrane pass occupies residues 243 to 264; sequence WWVPIVSPLLGSIAGVFVYQLM. Residues 265 to 292 are Cytoplasmic-facing; the sequence is IGCHLEQPPPSNEEENVKLAHVKHKEQI.

Belongs to the MIP/aquaporin (TC 1.A.8) family. As to quaternary structure, homotetramer; each monomer provides an independent glycerol/water pore. Could also exist in other oligomeric states. Widely expressed in epithelial cells of kidney (collecting ducts) and airways, in keratinocytes, immature dendritic cells and erythrocytes. Isoform 2 is not detectable in erythrocytes at the protein level.

It localises to the cell membrane. The protein resides in the basolateral cell membrane. The catalysed reaction is glycerol(in) = glycerol(out). The enzyme catalyses H2O(in) = H2O(out). It catalyses the reaction H2O2(out) = H2O2(in). It carries out the reaction urea(in) = urea(out). Its activity is regulated as follows. Glycerol transport is regulated by pH, with the porin being permeable to glycerol at pH 7.4 but not at pH 5.5. Water permeability, however, is not influenced by pH. Functionally, aquaglyceroporins form homotetrameric transmembrane channels, with each monomer independently mediating glycerol and water transport across the plasma membrane along their osmotic gradient. Could also be permeable to urea. Also participates in cell permeability to H2O2 and H2O2-mediated signaling. In skin, transports glycerol to the epidermis and stratum corneum, where it maintains hydration, elasticity, and supports lipid biosynthesis for barrier repair. In kidney, contributes to the reabsorption of water, helping the body maintain proper fluid balance. This Homo sapiens (Human) protein is Aquaporin-3.